The primary structure comprises 224 residues: UPF0758 protein Tola_0183 (224 aa).

The region spanning 102-224 (SLTSPQLVRR…PVSFAERGWL (123 aa)) is the MPN domain. Zn(2+) is bound by residues H173, H175, and D186. A JAMM motif motif is present at residues 173–186 (HNHPSGVAEPSHAD).

It belongs to the UPF0758 family.

The chain is UPF0758 protein Tola_0183 from Tolumonas auensis (strain DSM 9187 / NBRC 110442 / TA 4).